Reading from the N-terminus, the 435-residue chain is Adenylosuccinate synthetase (435 aa).

GTP contacts are provided by residues 11–17 (GDEGKGK) and 39–41 (GHT). D12 serves as the catalytic Proton acceptor. Mg(2+)-binding residues include D12 and G39. Residues 12–15 (DEGK), 37–40 (NAGH), T128, R142, Q223, T238, and R302 each bind IMP. H40 functions as the Proton donor in the catalytic mechanism. 298–304 (SVTGRPR) contributes to the substrate binding site. GTP is bound by residues R304, 330–332 (KLD), and 412–414 (STG).

It belongs to the adenylosuccinate synthetase family. In terms of assembly, homodimer. Requires Mg(2+) as cofactor.

It is found in the cytoplasm. It carries out the reaction IMP + L-aspartate + GTP = N(6)-(1,2-dicarboxyethyl)-AMP + GDP + phosphate + 2 H(+). Its pathway is purine metabolism; AMP biosynthesis via de novo pathway; AMP from IMP: step 1/2. Plays an important role in the de novo pathway of purine nucleotide biosynthesis. Catalyzes the first committed step in the biosynthesis of AMP from IMP. The polypeptide is Adenylosuccinate synthetase (Coxiella burnetii (strain RSA 493 / Nine Mile phase I)).